A 106-amino-acid polypeptide reads, in one-letter code: UPF0091 protein RP266 (106 aa).

It belongs to the UPF0091 family.

The polypeptide is UPF0091 protein RP266 (Rickettsia prowazekii (strain Madrid E)).